The chain runs to 446 residues: Phosphoglucosamine mutase (446 aa).

S99 functions as the Phosphoserine intermediate in the catalytic mechanism. Mg(2+) is bound by residues S99, D242, D244, and D246. A Phosphoserine modification is found at S99.

The protein belongs to the phosphohexose mutase family. Requires Mg(2+) as cofactor. Post-translationally, activated by phosphorylation.

The catalysed reaction is alpha-D-glucosamine 1-phosphate = D-glucosamine 6-phosphate. In terms of biological role, catalyzes the conversion of glucosamine-6-phosphate to glucosamine-1-phosphate. In Campylobacter fetus subsp. fetus (strain 82-40), this protein is Phosphoglucosamine mutase.